The following is a 294-amino-acid chain: Type 4 apparatus protein DotZ (294 aa).

As to quaternary structure, the T4BSS is a complex nanomachine composed of several subcomplexes. This subunit is part of the Type IV Coupling Complex (T4CC), a subcomplex composed of the DotLMNYZ core and the IcmSW-LvgA adapter subunits, linked by the C-terminal tail of DotL. Six DotLMNYZ hetero-pentameric units may assemble into a hexameric nanomachine, forming an inner membrane channel for effectors to pass through. Makes significant contact with DotN and DotY, but engages weakly with DotM and DotL. DotY and DotZ are co-dependent for the assembly into the T4CC.

Its subcellular location is the cytoplasm. In terms of biological role, component of the Dot/Icm type IVB secretion system (T4BSS), which is used to inject bacterial effector proteins into eukaryotic host cells. Part of a subcomplex which recruits effector proteins and delivers them to the core transmembrane subcomplex. DotY and DotZ play a role in effector translocation, but are not essential and do not influence the stability of the subcomplex main components. The DotY/DotZ main function is to optimize secretion by modulating the delivery trajectory of the IcmSW module and the localization of the machinery to the poles. This is Type 4 apparatus protein DotZ from Legionella pneumophila subsp. pneumophila (strain Philadelphia 1 / ATCC 33152 / DSM 7513).